A 91-amino-acid chain; its full sequence is Putative transmembrane protein ORF91a (91 aa).

3 helical membrane-spanning segments follow: residues 17-37 (TGIS…VGLA), 40-60 (AFLG…LLFM), and 69-89 (GIGF…YIST).

Its subcellular location is the host membrane. The sequence is that of Putative transmembrane protein ORF91a from Acidianus convivator (ABV).